The chain runs to 717 residues: Polyribonucleotide nucleotidyltransferase (717 aa).

Mg(2+)-binding residues include aspartate 486 and aspartate 492. A KH domain is found at proline 553–isoleucine 612. An S1 motif domain is found at glycine 622 to alanine 715. Residues serine 650 to arginine 681 form a disordered region. Over residues arginine 654–histidine 666 the composition is skewed to basic and acidic residues.

It belongs to the polyribonucleotide nucleotidyltransferase family. It depends on Mg(2+) as a cofactor.

The protein localises to the cytoplasm. It carries out the reaction RNA(n+1) + phosphate = RNA(n) + a ribonucleoside 5'-diphosphate. Its function is as follows. Involved in mRNA degradation. Catalyzes the phosphorolysis of single-stranded polyribonucleotides processively in the 3'- to 5'-direction. In Borrelia duttonii (strain Ly), this protein is Polyribonucleotide nucleotidyltransferase.